We begin with the raw amino-acid sequence, 89 residues long: Small ribosomal subunit protein uS15 (89 aa).

The protein belongs to the universal ribosomal protein uS15 family. In terms of assembly, part of the 30S ribosomal subunit. Forms a bridge to the 50S subunit in the 70S ribosome, contacting the 23S rRNA.

One of the primary rRNA binding proteins, it binds directly to 16S rRNA where it helps nucleate assembly of the platform of the 30S subunit by binding and bridging several RNA helices of the 16S rRNA. Its function is as follows. Forms an intersubunit bridge (bridge B4) with the 23S rRNA of the 50S subunit in the ribosome. The protein is Small ribosomal subunit protein uS15 of Acidiphilium cryptum (strain JF-5).